Consider the following 221-residue polypeptide: MASSSFSFLLVAALLGLASWKAIASDPSPLQDFCVADLNSPVRVNGFVCKNPMNASADDFFKAAMLDKPRDTNNKVGSNVTLVNVLQLPGLNTLGISIARLDFAPLGLNPPHTHPRATEIFTVLEGTLYVGFVTSNPDNRLLSKVLNKGDVFVFPEGLIHFQFNPNPHKPAVAIAALSSQNPGVITIANAVFGSNPPISDDILMKAFQVDKKIIDLLQAQF.

Positions 1–24 are cleaved as a signal peptide; sequence MASSSFSFLLVAALLGLASWKAIA. An intrachain disulfide couples Cys-34 to Cys-49. N-linked (GlcNAc...) asparagine glycosylation is found at Asn-54 and Asn-79. Residues 64–215 form the Cupin type-1 domain; the sequence is AMLDKPRDTN…AFQVDKKIID (152 aa). Mn(2+) is bound by residues His-112, His-114, Glu-119, and His-160.

The protein belongs to the germin family. As to quaternary structure, oligomer (believed to be a pentamer but probably hexamer).

The protein resides in the secreted. It localises to the extracellular space. Its subcellular location is the apoplast. In terms of biological role, plays a role in broad-spectrum disease resistance. Probably has no oxalate oxidase activity even if the active site is conserved. The sequence is that of Germin-like protein 8-2 (GER3) from Oryza sativa subsp. japonica (Rice).